The following is a 495-amino-acid chain: Maintenance of mitochondrial morphology protein 1 (495 aa).

The Lumenal portion of the chain corresponds to 1–22 (MALQQHEPAPFAPQSSLSFTQG). Residues 23–43 (FLLGQLSVVLLIGAFIKFFIF) form a helical membrane-spanning segment. Residues 44–495 (GEAPPPPSRG…PVGTPGIPDN (452 aa)) lie on the Cytoplasmic side of the membrane. Disordered regions lie at residues 63-94 (YSSV…PSTS), 269-320 (ASTE…SPKS), 382-428 (WPRM…EPEG), and 440-495 (GLGA…IPDN). Composition is skewed to polar residues over residues 65 to 74 (SVYSPPQDSQ) and 82 to 94 (STSN…PSTS). The region spanning 128 to 379 (QPESLDWFNV…EPRVQVVGLP (252 aa)) is the SMP-LTD domain. Residues 271-289 (TEPPEPLQTPAGSPAPPTS) are compositionally biased toward pro residues. The segment covering 418–428 (FSDDHGREPEG) has biased composition (basic and acidic residues). Polar residues predominate over residues 458–469 (RSSSMTRQQSGG).

Belongs to the MMM1 family. In terms of assembly, homodimer. Component of the ER-mitochondria encounter structure (ERMES) or MDM complex, composed of mmm1, mdm10, mdm12 and mdm34. An MMM1 homodimer associates with one molecule of mdm12 on each side in a pairwise head-to-tail manner, and the SMP-LTD domains of mmm1 and mdm12 generate a continuous hydrophobic tunnel for phospholipid trafficking.

It localises to the endoplasmic reticulum membrane. Functionally, component of the ERMES/MDM complex, which serves as a molecular tether to connect the endoplasmic reticulum (ER) and mitochondria. Components of this complex are involved in the control of mitochondrial shape and protein biogenesis, and function in nonvesicular lipid trafficking between the ER and mitochondria. The mdm12-mmm1 subcomplex functions in the major beta-barrel assembly pathway that is responsible for biogenesis of all outer membrane beta-barrel proteins, and acts in a late step after the SAM complex. The mdm10-mdm12-mmm1 subcomplex further acts in the TOM40-specific pathway after the action of the mdm12-mmm1 complex. Essential for establishing and maintaining the structure of mitochondria and maintenance of mtDNA nucleoids. This Penicillium rubens (strain ATCC 28089 / DSM 1075 / NRRL 1951 / Wisconsin 54-1255) (Penicillium chrysogenum) protein is Maintenance of mitochondrial morphology protein 1.